The chain runs to 252 residues: Probable truncated L-gulonolactone oxidase 7, mitochondrial (252 aa).

The transit peptide at 1–102 (MKRSMRSHLA…ELNYGVLVRY (102 aa)) directs the protein to the mitochondrion.

It belongs to the oxygen-dependent FAD-linked oxidoreductase family.

The protein resides in the mitochondrion. It carries out the reaction L-gulono-1,4-lactone + O2 = L-ascorbate + H2O2 + H(+). The protein operates within cofactor biosynthesis; L-ascorbate biosynthesis. May be involved in the biosynthesis of ascorbic acid. The chain is Probable truncated L-gulonolactone oxidase 7, mitochondrial from Arabidopsis thaliana (Mouse-ear cress).